The chain runs to 287 residues: MKKKKRFKQKLLIASLVIGLVAVLSGCGYSTDPITKDSTGFWSHYIVFPLSWVITWFSDLFGGNYAVGIIVVTILIRLLIMPLMIKQLKSQKAMTSLQPKIKELQEKYSSKDNETKQKLQQETMRLYQENSVNPMMGCLPLLIQMPILLGFYQAISRTAEIKTDTFLWMQLGNPDPYYILPIVAALTTFLSSKISMMGQTQQNKSMAMIVYIMPVMILFMGITLPSALALYWIIGNIFTVFQTLLINNPFKNKREQEALAAAQLEEERLKKKAANMKASKKGGKKRK.

An N-terminal signal peptide occupies residues 1-26 (MKKKKRFKQKLLIASLVIGLVAVLSG). Residue cysteine 27 is the site of N-palmitoyl cysteine attachment. Cysteine 27 carries the S-diacylglycerol cysteine lipid modification. Helical transmembrane passes span 65-85 (YAVG…PLMI), 135-155 (MMGC…YQAI), 178-198 (YILP…SMMG), 207-224 (AMIV…GITL), and 228-250 (LALY…NNPF).

Belongs to the OXA1/ALB3/YidC family. Type 2 subfamily.

It is found in the cell membrane. In terms of biological role, required for the insertion and/or proper folding and/or complex formation of integral membrane proteins into the membrane. Involved in integration of membrane proteins that insert both dependently and independently of the Sec translocase complex, as well as at least some lipoproteins. The polypeptide is Membrane protein insertase YidC 2 (Listeria innocua serovar 6a (strain ATCC BAA-680 / CLIP 11262)).